Here is a 246-residue protein sequence, read N- to C-terminus: TATA-box-binding protein (246 aa).

Positions 1 to 27 (MSSDKTSQQTFKLAPNNSVAQSNSIDQ) are disordered. A run of 2 repeats spans residues 53–129 (LQNI…AKII) and 143–220 (IQNI…YWVL).

The protein belongs to the TBP family. In terms of assembly, belongs to the TFIID complex together with the TBP-associated factors (TAFs). Binds DNA as monomer.

Its subcellular location is the nucleus. Its function is as follows. General transcription factor that functions at the core of the DNA-binding multiprotein factor TFIID. Binding of TFIID to the TATA box is the initial transcriptional step of the pre-initiation complex (PIC), playing a role in the activation of eukaryotic genes transcribed by RNA polymerase II. In Tetrahymena thermophila, this protein is TATA-box-binding protein.